The following is a 270-amino-acid chain: Putative postmeiotic segregation increased 2-like protein 11 (270 aa).

This sequence belongs to the DNA mismatch repair MutL/HexB family.

In Homo sapiens (Human), this protein is Putative postmeiotic segregation increased 2-like protein 11 (PMS2P11).